Consider the following 230-residue polypeptide: Acetyltransferase (230 aa).

In terms of domain architecture, N-acetyltransferase spans 143–230 (RYLDGKVICD…RVAVYKARQT (88 aa)).

It participates in mycotoxin biosynthesis. Functionally, acetyltransferase; part of the satratoxin SC3 cluster involved in the biosynthesis of satratoxins, trichothecene mycotoxins that are associated with human food poisonings. Satratoxins are suggested to be made by products of multiple gene clusters (SC1, SC2 and SC3) that encode 21 proteins in all, including polyketide synthases, acetyltransferases, and other enzymes expected to modify the trichothecene skeleton. SC1 encodes 10 proteins, SAT1 to SAT10. The largest are SAT8, which encodes a putative polyketide synthase (PKS) with a conventional non-reducing architecture, and SAT10, a putative protein containing four ankyrin repeats and thus may be involved in protein scaffolding. The putative short-chain reductase SAT3 may assist the PKS in some capacity. SAT6 contains a secretory lipase domain and acts probably as a trichothecene esterase. SAT5 encodes a putative acetyltransferase, and so, with SAT6, may affect endogenous protection from toxicity. The probable transcription factor SAT9 may regulate the expression of the SC1 cluster. SC2 encodes proteins SAT11 to SAT16, the largest of which encodes the putative reducing PKS SAT13. SAT11 is a cytochrome P450 monooxygenase, while SAT14 and SAT16 are probable acetyltransferases. The SC2 cluster may be regulated by the transcription factor SAT15. SC3 is a small cluster that encodes 5 proteins, SAT17 to SAT21. SAT21 is a putative MFS-type transporter which may have a role in exporting secondary metabolites. The four other proteins putatively encoded in SC3 include the taurine hydroxylase-like protein SAT17, the O-methyltransferase SAT18, the acetyltransferase SAT19, and the Cys6-type zinc finger SAT20, the latter being probably involved in regulation of SC3 expression. In Stachybotrys chartarum (strain CBS 109288 / IBT 7711) (Toxic black mold), this protein is Acetyltransferase.